Consider the following 121-residue polypeptide: Large ribosomal subunit protein uL18 (121 aa).

The protein belongs to the universal ribosomal protein uL18 family. As to quaternary structure, part of the 50S ribosomal subunit; part of the 5S rRNA/L5/L18/L25 subcomplex. Contacts the 5S and 23S rRNAs.

Functionally, this is one of the proteins that bind and probably mediate the attachment of the 5S RNA into the large ribosomal subunit, where it forms part of the central protuberance. This chain is Large ribosomal subunit protein uL18, found in Desulfotalea psychrophila (strain LSv54 / DSM 12343).